A 337-amino-acid polypeptide reads, in one-letter code: Protein-methionine-sulfoxide reductase catalytic subunit MsrP (337 aa).

Residues 1 to 54 constitute a signal peptide (tat-type signal); sequence MLIKLPRSSECKASEITPEGIYLSRRTLLGGSLAGLALGALPGGVGAAQMSRYA. Mo-molybdopterin-binding positions include Asn-94, 97-98, Cys-152, Thr-187, Asn-237, Arg-242, and 253-255; these read YE and SIK.

This sequence belongs to the MsrP family. In terms of assembly, heterodimer of a catalytic subunit (MsrP) and a heme-binding subunit (MsrQ). It depends on Mo-molybdopterin as a cofactor. Post-translationally, predicted to be exported by the Tat system. The position of the signal peptide cleavage has not been experimentally proven.

The protein resides in the periplasm. It catalyses the reaction L-methionyl-[protein] + a quinone + H2O = L-methionyl-(S)-S-oxide-[protein] + a quinol. The enzyme catalyses L-methionyl-[protein] + a quinone + H2O = L-methionyl-(R)-S-oxide-[protein] + a quinol. Part of the MsrPQ system that repairs oxidized periplasmic proteins containing methionine sulfoxide residues (Met-O), using respiratory chain electrons. Thus protects these proteins from oxidative-stress damage caused by reactive species of oxygen and chlorine generated by the host defense mechanisms. MsrPQ is essential for the maintenance of envelope integrity under bleach stress, rescuing a wide series of structurally unrelated periplasmic proteins from methionine oxidation. The catalytic subunit MsrP is non-stereospecific, being able to reduce both (R-) and (S-) diastereoisomers of methionine sulfoxide. In Pseudomonas putida (strain ATCC 47054 / DSM 6125 / CFBP 8728 / NCIMB 11950 / KT2440), this protein is Protein-methionine-sulfoxide reductase catalytic subunit MsrP.